We begin with the raw amino-acid sequence, 206 residues long: 2,3-bisphosphoglycerate-dependent phosphoglycerate mutase (206 aa).

Substrate-binding positions include 9-16 (RHGQSEWN), 22-23 (TG), R61, 88-91 (ERDY), K99, 115-116 (RR), and 159-160 (GN). H10 acts as the Tele-phosphohistidine intermediate in catalysis. E88 (proton donor/acceptor) is an active-site residue.

This sequence belongs to the phosphoglycerate mutase family. BPG-dependent PGAM subfamily. Homodimer.

It catalyses the reaction (2R)-2-phosphoglycerate = (2R)-3-phosphoglycerate. Its pathway is carbohydrate degradation; glycolysis; pyruvate from D-glyceraldehyde 3-phosphate: step 3/5. Catalyzes the interconversion of 2-phosphoglycerate and 3-phosphoglycerate. This chain is 2,3-bisphosphoglycerate-dependent phosphoglycerate mutase, found in Brucella ovis (strain ATCC 25840 / 63/290 / NCTC 10512).